A 294-amino-acid chain; its full sequence is Small ribosomal subunit protein uS2 (294 aa).

The tract at residues 232 to 294 is disordered; it reads RATGTTEAPE…SAAGEADAAK (63 aa). Basic and acidic residues predominate over residues 246-259; the sequence is EWERELLEGSKSEE. The segment covering 260-294 has biased composition (low complexity); sequence AAAPAAAEEAPAAAEEAPAAAEATESAAGEADAAK.

The protein belongs to the universal ribosomal protein uS2 family.

The polypeptide is Small ribosomal subunit protein uS2 (Arthrobacter sp. (strain FB24)).